The chain runs to 196 residues: MTTIIGIKARDGVVLASDKQASMGNIVEDKRAQKIIPITDYILLAGSGTVADLQHIAKILKTELKLRELYSRRTMNVIEAANLLSHLLYQNRFYLNPLGLLIAGPINSKEFGIYSLDGIGAISEIKDYFAEGSGGVIALGTLEAEYNPDITVRDAIKLAEKALKSSIARDVFSGYGIEIYTITKKGVEKLFLEAQK.

Position 1 (Met-1) is a propeptide, removed in mature form; by autocatalysis. Residue Thr-2 is the Nucleophile of the active site.

This sequence belongs to the peptidase T1B family. In terms of assembly, the 20S proteasome core is composed of 14 alpha and 14 beta subunits that assemble into four stacked heptameric rings, resulting in a barrel-shaped structure. The two inner rings, each composed of seven catalytic beta subunits, are sandwiched by two outer rings, each composed of seven alpha subunits. The catalytic chamber with the active sites is on the inside of the barrel. Has a gated structure, the ends of the cylinder being occluded by the N-termini of the alpha-subunits. Is capped at one or both ends by the proteasome regulatory ATPase, PAN.

Its subcellular location is the cytoplasm. It carries out the reaction Cleavage of peptide bonds with very broad specificity.. The formation of the proteasomal ATPase PAN-20S proteasome complex, via the docking of the C-termini of PAN into the intersubunit pockets in the alpha-rings, triggers opening of the gate for substrate entry. Interconversion between the open-gate and close-gate conformations leads to a dynamic regulation of the 20S proteasome proteolysis activity. Component of the proteasome core, a large protease complex with broad specificity involved in protein degradation. The chain is Proteasome subunit beta from Nanoarchaeum equitans (strain Kin4-M).